The chain runs to 92 residues: 11 kDa excretory-secretory protein (92 aa).

In Trichostrongylus colubriformis (Black scour worm), this protein is 11 kDa excretory-secretory protein.